Consider the following 187-residue polypeptide: UPF0301 protein KPN78578_33170 (187 aa).

Belongs to the UPF0301 (AlgH) family.

In Klebsiella pneumoniae subsp. pneumoniae (strain ATCC 700721 / MGH 78578), this protein is UPF0301 protein KPN78578_33170.